The chain runs to 1527 residues: DNA (cytosine-5)-methyltransferase 1A (1527 aa).

Disordered regions lie at residues 1–62 and 661–718; these read MAKS…PKRA and GDTK…KEIK. Acidic residues-rich tracts occupy residues 25–36 and 664–692; these read EPVENENLESEF and KEEDQNEPKEIDDDQEENEDNDAEEEVNV. The span at 709-718 shows a compositional bias: basic and acidic residues; the sequence is SSADTRKEIK. BAH domains lie at 742–874 and 910–1049; these read LSIS…FSLP and ITYN…KQLP. The SAM-dependent MTase C5-type domain occupies 1092–1526; the sequence is LATLDIFAGC…RKLKQAIDAK (435 aa). The active site involves C1197.

The protein belongs to the class I-like SAM-binding methyltransferase superfamily. C5-methyltransferase family. As to expression, expressed in roots and inflorescences. Expressed in roots, panicles, anthers, pistils, endosperm and imbibed embryos. Expressed in tissues containing actively replicating and dividing cells, such as shoot and root meristems.

The protein resides in the nucleus. It catalyses the reaction a 2'-deoxycytidine in DNA + S-adenosyl-L-methionine = a 5-methyl-2'-deoxycytidine in DNA + S-adenosyl-L-homocysteine + H(+). Functionally, probably methylates CpG residues and maintains DNA methylation. May be involved in methylation-dependent gene silencing. May play a minor role in the maintenance of DNA methylation. This Oryza sativa subsp. japonica (Rice) protein is DNA (cytosine-5)-methyltransferase 1A.